The chain runs to 543 residues: Hydroxylamine reductase (543 aa).

Residues C5, C8, C17, and C23 each contribute to the [4Fe-4S] cluster site. The hybrid [4Fe-2O-2S] cluster site is built by H250, E274, C318, C410, C438, C463, E498, and K500. C410 carries the post-translational modification Cysteine persulfide.

It belongs to the HCP family. The cofactor is [4Fe-4S] cluster. Requires hybrid [4Fe-2O-2S] cluster as cofactor.

The protein localises to the cytoplasm. The enzyme catalyses A + NH4(+) + H2O = hydroxylamine + AH2 + H(+). Catalyzes the reduction of hydroxylamine to form NH(3) and H(2)O. In Petrotoga mobilis (strain DSM 10674 / SJ95), this protein is Hydroxylamine reductase.